The sequence spans 458 residues: UDP-N-acetylmuramoylalanine--D-glutamate ligase (458 aa).

124 to 130 (GSDGKTT) lines the ATP pocket.

It belongs to the MurCDEF family.

The protein resides in the cytoplasm. The catalysed reaction is UDP-N-acetyl-alpha-D-muramoyl-L-alanine + D-glutamate + ATP = UDP-N-acetyl-alpha-D-muramoyl-L-alanyl-D-glutamate + ADP + phosphate + H(+). It participates in cell wall biogenesis; peptidoglycan biosynthesis. In terms of biological role, cell wall formation. Catalyzes the addition of glutamate to the nucleotide precursor UDP-N-acetylmuramoyl-L-alanine (UMA). The protein is UDP-N-acetylmuramoylalanine--D-glutamate ligase of Clostridium botulinum (strain 657 / Type Ba4).